The following is a 308-amino-acid chain: MTKTLVFGHKNPDTDTICSAISYAELKKAQGADIEAVRLGELNSETTFVLDYFQATAPRLVQTVANEVSEVALVDHNERQQSANDIDEVTVTAVVDHHRIANFETSDPLYYRAEPVGCTTTILLKMFRENEVEISKTVAGLMLSAIISDTLLFQSPTCTEEDKVAAEKLAVIADVDIQTYGMEMLKAGADVSKKTVAELLLDAKEFNMNGNKVEIAQINVVDVNDVLNRRSEVEALMTQNVVDKGLDLYLFVITNILTNDSIGISIGSKTSVVEEAYGIKFVENQAPLKGVVSRKKQVVPILTDTFAK.

Mn(2+) is bound by residues histidine 9, aspartate 13, aspartate 15, aspartate 75, histidine 97, and aspartate 149.

This sequence belongs to the PPase class C family. Mn(2+) is required as a cofactor.

The protein resides in the cytoplasm. It carries out the reaction diphosphate + H2O = 2 phosphate + H(+). The sequence is that of Probable manganese-dependent inorganic pyrophosphatase from Listeria welshimeri serovar 6b (strain ATCC 35897 / DSM 20650 / CCUG 15529 / CIP 8149 / NCTC 11857 / SLCC 5334 / V8).